A 100-amino-acid chain; its full sequence is NADH-quinone oxidoreductase subunit K (100 aa).

3 consecutive transmembrane segments (helical) span residues 1 to 21 (MIGLNHYLIVSGLLFCIGLAG), 28 to 48 (ILLLFFSTEIMLNAINIGFIA), and 64 to 84 (FIIAIAASEVAIGLGLVILWF).

It belongs to the complex I subunit 4L family. NDH-1 is composed of 14 different subunits. Subunits NuoA, H, J, K, L, M, N constitute the membrane sector of the complex.

It localises to the cell inner membrane. The enzyme catalyses a quinone + NADH + 5 H(+)(in) = a quinol + NAD(+) + 4 H(+)(out). Functionally, NDH-1 shuttles electrons from NADH, via FMN and iron-sulfur (Fe-S) centers, to quinones in the respiratory chain. The immediate electron acceptor for the enzyme in this species is believed to be ubiquinone. Couples the redox reaction to proton translocation (for every two electrons transferred, four hydrogen ions are translocated across the cytoplasmic membrane), and thus conserves the redox energy in a proton gradient. This is NADH-quinone oxidoreductase subunit K from Helicobacter pylori (strain G27).